The chain runs to 96 residues: Small ribosomal subunit protein bS6 (96 aa).

It belongs to the bacterial ribosomal protein bS6 family.

In terms of biological role, binds together with bS18 to 16S ribosomal RNA. This chain is Small ribosomal subunit protein bS6, found in Bacillus cereus (strain ATCC 10987 / NRS 248).